We begin with the raw amino-acid sequence, 268 residues long: 4-hydroxy-tetrahydrodipicolinate reductase (268 aa).

Residues 10–15 (GASGRM), D36, 99–101 (GTT), and 123–126 (APNM) contribute to the NAD(+) site. Residue H156 is the Proton donor/acceptor of the active site. H157 serves as a coordination point for (S)-2,3,4,5-tetrahydrodipicolinate. Catalysis depends on K160, which acts as the Proton donor. 166–167 (GT) contributes to the (S)-2,3,4,5-tetrahydrodipicolinate binding site.

It belongs to the DapB family.

The protein localises to the cytoplasm. It carries out the reaction (S)-2,3,4,5-tetrahydrodipicolinate + NAD(+) + H2O = (2S,4S)-4-hydroxy-2,3,4,5-tetrahydrodipicolinate + NADH + H(+). The catalysed reaction is (S)-2,3,4,5-tetrahydrodipicolinate + NADP(+) + H2O = (2S,4S)-4-hydroxy-2,3,4,5-tetrahydrodipicolinate + NADPH + H(+). Its pathway is amino-acid biosynthesis; L-lysine biosynthesis via DAP pathway; (S)-tetrahydrodipicolinate from L-aspartate: step 4/4. Catalyzes the conversion of 4-hydroxy-tetrahydrodipicolinate (HTPA) to tetrahydrodipicolinate. The protein is 4-hydroxy-tetrahydrodipicolinate reductase of Herminiimonas arsenicoxydans.